Reading from the N-terminus, the 558-residue chain is Methionine--tRNA ligase 1 (558 aa).

A 'HIGH' region motif is present at residues 10-20; the sequence is PYINGIKHLGN. Residues Cys-142, Cys-145, Cys-155, and Cys-158 each coordinate Zn(2+). Residues 332–336 carry the 'KMSKS' region motif; the sequence is KFSTS. Position 335 (Thr-335) interacts with ATP.

Belongs to the class-I aminoacyl-tRNA synthetase family. MetG type 1 subfamily. Monomer. It depends on Zn(2+) as a cofactor.

The protein resides in the cytoplasm. The enzyme catalyses tRNA(Met) + L-methionine + ATP = L-methionyl-tRNA(Met) + AMP + diphosphate. Functionally, is required not only for elongation of protein synthesis but also for the initiation of all mRNA translation through initiator tRNA(fMet) aminoacylation. The sequence is that of Methionine--tRNA ligase 1 from Acaryochloris marina (strain MBIC 11017).